The chain runs to 149 residues: Large ribosomal subunit protein uL13 (149 aa).

This sequence belongs to the universal ribosomal protein uL13 family. In terms of assembly, part of the 50S ribosomal subunit.

Its function is as follows. This protein is one of the early assembly proteins of the 50S ribosomal subunit, although it is not seen to bind rRNA by itself. It is important during the early stages of 50S assembly. In Borrelia hermsii (strain HS1 / DAH), this protein is Large ribosomal subunit protein uL13.